The chain runs to 1192 residues: Chromosome partition protein Smc (1192 aa).

31 to 38 is an ATP binding site; it reads PNGSGKSN. Coiled-coil stretches lie at residues 164-197, 234-292, 333-369, and 396-464; these read AGISRFKAKKVEAERRLERVQTNLTRLGDIVDEV, LTLS…RSEL, SAIADLRKTIAALEVAEAELADVQQKKESIAAKRDVE, and EHEA…DAKV. An SMC hinge domain is found at 522–636; sequence KDLVGIVADC…LVDTLATAIG (115 aa). Coiled-coil stretches lie at residues 676–736, 772–902, and 986–1030; these read RSEL…AKLH, ELAV…EREA, and GSVN…INAD.

The protein belongs to the SMC family. As to quaternary structure, homodimer.

The protein resides in the cytoplasm. Its function is as follows. Required for chromosome condensation and partitioning. The chain is Chromosome partition protein Smc from Rhodopirellula baltica (strain DSM 10527 / NCIMB 13988 / SH1).